A 246-amino-acid chain; its full sequence is Ribonuclease PH (246 aa).

Phosphate-binding positions include arginine 91 and 129–131; that span reads GTR.

This sequence belongs to the RNase PH family. Homohexameric ring arranged as a trimer of dimers.

The enzyme catalyses tRNA(n+1) + phosphate = tRNA(n) + a ribonucleoside 5'-diphosphate. Functionally, phosphorolytic 3'-5' exoribonuclease that plays an important role in tRNA 3'-end maturation. Removes nucleotide residues following the 3'-CCA terminus of tRNAs; can also add nucleotides to the ends of RNA molecules by using nucleoside diphosphates as substrates, but this may not be physiologically important. Probably plays a role in initiation of 16S rRNA degradation (leading to ribosome degradation) during starvation. In Burkholderia vietnamiensis (strain G4 / LMG 22486) (Burkholderia cepacia (strain R1808)), this protein is Ribonuclease PH.